The chain runs to 293 residues: 33 kDa chaperonin (293 aa).

Cystine bridges form between C236–C238 and C269–C272.

It belongs to the HSP33 family. Post-translationally, under oxidizing conditions two disulfide bonds are formed involving the reactive cysteines. Under reducing conditions zinc is bound to the reactive cysteines and the protein is inactive.

Its subcellular location is the cytoplasm. Functionally, redox regulated molecular chaperone. Protects both thermally unfolding and oxidatively damaged proteins from irreversible aggregation. Plays an important role in the bacterial defense system toward oxidative stress. The protein is 33 kDa chaperonin of Lactobacillus delbrueckii subsp. bulgaricus (strain ATCC 11842 / DSM 20081 / BCRC 10696 / JCM 1002 / NBRC 13953 / NCIMB 11778 / NCTC 12712 / WDCM 00102 / Lb 14).